Reading from the N-terminus, the 633-residue chain is 1-deoxy-D-xylulose-5-phosphate synthase (633 aa).

The disordered stretch occupies residues 1-22; it reads MPTTFHEIPRKRPTTPLLDRAQ. Thiamine diphosphate is bound by residues His-87 and 128–130; that span reads GHS. Asp-159 is a binding site for Mg(2+). Residues 160–161, Asn-188, Phe-295, and Glu-378 contribute to the thiamine diphosphate site; that span reads GA. Asn-188 contacts Mg(2+).

The protein belongs to the transketolase family. DXPS subfamily. In terms of assembly, homodimer. The cofactor is Mg(2+). Requires thiamine diphosphate as cofactor.

The enzyme catalyses D-glyceraldehyde 3-phosphate + pyruvate + H(+) = 1-deoxy-D-xylulose 5-phosphate + CO2. It participates in metabolic intermediate biosynthesis; 1-deoxy-D-xylulose 5-phosphate biosynthesis; 1-deoxy-D-xylulose 5-phosphate from D-glyceraldehyde 3-phosphate and pyruvate: step 1/1. Its function is as follows. Catalyzes the acyloin condensation reaction between C atoms 2 and 3 of pyruvate and glyceraldehyde 3-phosphate to yield 1-deoxy-D-xylulose-5-phosphate (DXP). The protein is 1-deoxy-D-xylulose-5-phosphate synthase of Pseudomonas fluorescens (strain ATCC BAA-477 / NRRL B-23932 / Pf-5).